The sequence spans 363 residues: 3-dehydroquinate synthase (363 aa).

NAD(+)-binding positions include 134 to 135 (TT), Lys147, Lys156, and 174 to 177 (TLKT). 3 residues coordinate Zn(2+): Glu189, His254, and His271.

The protein belongs to the sugar phosphate cyclases superfamily. Dehydroquinate synthase family. Co(2+) serves as cofactor. Requires Zn(2+) as cofactor. NAD(+) is required as a cofactor.

The protein resides in the cytoplasm. It carries out the reaction 7-phospho-2-dehydro-3-deoxy-D-arabino-heptonate = 3-dehydroquinate + phosphate. The protein operates within metabolic intermediate biosynthesis; chorismate biosynthesis; chorismate from D-erythrose 4-phosphate and phosphoenolpyruvate: step 2/7. Catalyzes the conversion of 3-deoxy-D-arabino-heptulosonate 7-phosphate (DAHP) to dehydroquinate (DHQ). In Prochlorococcus marinus (strain MIT 9515), this protein is 3-dehydroquinate synthase.